The sequence spans 853 residues: Leucine--tRNA ligase (853 aa).

Positions 42 to 52 (PYPSGNLHMGH) match the 'HIGH' region motif. Positions 615–619 (KMSKS) match the 'KMSKS' region motif. Lys-618 is a binding site for ATP.

Belongs to the class-I aminoacyl-tRNA synthetase family.

The protein localises to the cytoplasm. It carries out the reaction tRNA(Leu) + L-leucine + ATP = L-leucyl-tRNA(Leu) + AMP + diphosphate. In Crocosphaera subtropica (strain ATCC 51142 / BH68) (Cyanothece sp. (strain ATCC 51142)), this protein is Leucine--tRNA ligase.